We begin with the raw amino-acid sequence, 152 residues long: Erythema protein SVEP (152 aa).

The first 18 residues, 1-18 (MSITQSFFVLTLAIFGAA), serve as a signal peptide directing secretion.

As to expression, salivary gland (at protein level).

It is found in the secreted. Salivary vasoactive peptide; induces vasodilatation in bioassay with rabbit aortic rings. This is Erythema protein SVEP from Simulium vittatum (Striped black fly).